The chain runs to 676 residues: DNA ligase (676 aa).

Residues 34–38 (DAEYD), 84–85 (SL), and Glu-116 each bind NAD(+). Lys-118 serves as the catalytic N6-AMP-lysine intermediate. The NAD(+) site is built by Arg-139, Glu-174, Lys-294, and Lys-318. Zn(2+)-binding residues include Cys-412, Cys-415, Cys-428, and Cys-433. In terms of domain architecture, BRCT spans 589-676 (KGGEALKGLT…RTGKKAEELV (88 aa)).

It belongs to the NAD-dependent DNA ligase family. LigA subfamily. It depends on Mg(2+) as a cofactor. Mn(2+) is required as a cofactor.

The enzyme catalyses NAD(+) + (deoxyribonucleotide)n-3'-hydroxyl + 5'-phospho-(deoxyribonucleotide)m = (deoxyribonucleotide)n+m + AMP + beta-nicotinamide D-nucleotide.. Functionally, DNA ligase that catalyzes the formation of phosphodiester linkages between 5'-phosphoryl and 3'-hydroxyl groups in double-stranded DNA using NAD as a coenzyme and as the energy source for the reaction. It is essential for DNA replication and repair of damaged DNA. The sequence is that of DNA ligase from Thermus thermophilus (strain ATCC BAA-163 / DSM 7039 / HB27).